Consider the following 273-residue polypeptide: Formamidopyrimidine-DNA glycosylase (273 aa).

Catalysis depends on Pro-2, which acts as the Schiff-base intermediate with DNA. Glu-3 acts as the Proton donor in catalysis. The active-site Proton donor; for beta-elimination activity is Lys-57. Positions 91, 110, and 151 each coordinate DNA. The FPG-type zinc-finger motif lies at 236-270; that stretch reads QVYGRKDEACNDCGTIIEAKVIGQRNSYFCPHCQM. The Proton donor; for delta-elimination activity role is filled by Arg-260.

The protein belongs to the FPG family. As to quaternary structure, monomer. It depends on Zn(2+) as a cofactor.

The catalysed reaction is Hydrolysis of DNA containing ring-opened 7-methylguanine residues, releasing 2,6-diamino-4-hydroxy-5-(N-methyl)formamidopyrimidine.. It carries out the reaction 2'-deoxyribonucleotide-(2'-deoxyribose 5'-phosphate)-2'-deoxyribonucleotide-DNA = a 3'-end 2'-deoxyribonucleotide-(2,3-dehydro-2,3-deoxyribose 5'-phosphate)-DNA + a 5'-end 5'-phospho-2'-deoxyribonucleoside-DNA + H(+). Functionally, involved in base excision repair of DNA damaged by oxidation or by mutagenic agents. Acts as a DNA glycosylase that recognizes and removes damaged bases. Has a preference for oxidized purines, such as 7,8-dihydro-8-oxoguanine (8-oxoG). Has AP (apurinic/apyrimidinic) lyase activity and introduces nicks in the DNA strand. Cleaves the DNA backbone by beta-delta elimination to generate a single-strand break at the site of the removed base with both 3'- and 5'-phosphates. The sequence is that of Formamidopyrimidine-DNA glycosylase from Actinobacillus pleuropneumoniae serotype 5b (strain L20).